A 206-amino-acid chain; its full sequence is 2,3-bisphosphoglycerate-dependent phosphoglycerate mutase (206 aa).

Residues 9-16 (RHGQSEWN), 22-23 (TG), R61, 88-91 (ERNY), K99, 115-116 (RR), and 159-160 (GN) each bind substrate. The active-site Tele-phosphohistidine intermediate is the H10. Residue E88 is the Proton donor/acceptor of the active site.

Belongs to the phosphoglycerate mutase family. BPG-dependent PGAM subfamily. Homodimer.

The catalysed reaction is (2R)-2-phosphoglycerate = (2R)-3-phosphoglycerate. Its pathway is carbohydrate degradation; glycolysis; pyruvate from D-glyceraldehyde 3-phosphate: step 3/5. Functionally, catalyzes the interconversion of 2-phosphoglycerate and 3-phosphoglycerate. The sequence is that of 2,3-bisphosphoglycerate-dependent phosphoglycerate mutase from Bartonella tribocorum (strain CIP 105476 / IBS 506).